Reading from the N-terminus, the 204-residue chain is Large ribosomal subunit protein uL4 (204 aa).

The interval 47-69 is disordered; that stretch reads KAQKTRAEVSGGGKKPWRQKGTG.

The protein belongs to the universal ribosomal protein uL4 family. In terms of assembly, part of the 50S ribosomal subunit.

One of the primary rRNA binding proteins, this protein initially binds near the 5'-end of the 23S rRNA. It is important during the early stages of 50S assembly. It makes multiple contacts with different domains of the 23S rRNA in the assembled 50S subunit and ribosome. Functionally, forms part of the polypeptide exit tunnel. This is Large ribosomal subunit protein uL4 from Cellvibrio japonicus (strain Ueda107) (Pseudomonas fluorescens subsp. cellulosa).